The chain runs to 168 residues: Small ribosomal subunit protein uS9 (168 aa).

The segment covering 1-15 (MAQNEETTEAVEAEE) has biased composition (acidic residues). Residues 1-34 (MAQNEETTEAVEAEETLTSYTSESGAAEAAAPKK) form a disordered region.

Belongs to the universal ribosomal protein uS9 family.

In Arthrobacter sp. (strain FB24), this protein is Small ribosomal subunit protein uS9.